Consider the following 134-residue polypeptide: Ribosome-binding factor A (134 aa).

It belongs to the RbfA family. In terms of assembly, monomer. Binds 30S ribosomal subunits, but not 50S ribosomal subunits or 70S ribosomes.

The protein resides in the cytoplasm. Functionally, one of several proteins that assist in the late maturation steps of the functional core of the 30S ribosomal subunit. Associates with free 30S ribosomal subunits (but not with 30S subunits that are part of 70S ribosomes or polysomes). Required for efficient processing of 16S rRNA. May interact with the 5'-terminal helix region of 16S rRNA. The polypeptide is Ribosome-binding factor A (Tolumonas auensis (strain DSM 9187 / NBRC 110442 / TA 4)).